The sequence spans 417 residues: Tryptophan synthase beta chain (417 aa).

An N6-(pyridoxal phosphate)lysine modification is found at Lys111.

Belongs to the TrpB family. As to quaternary structure, tetramer of two alpha and two beta chains. The cofactor is pyridoxal 5'-phosphate.

The catalysed reaction is (1S,2R)-1-C-(indol-3-yl)glycerol 3-phosphate + L-serine = D-glyceraldehyde 3-phosphate + L-tryptophan + H2O. Its pathway is amino-acid biosynthesis; L-tryptophan biosynthesis; L-tryptophan from chorismate: step 5/5. Its function is as follows. The beta subunit is responsible for the synthesis of L-tryptophan from indole and L-serine. The polypeptide is Tryptophan synthase beta chain (Fervidobacterium nodosum (strain ATCC 35602 / DSM 5306 / Rt17-B1)).